Here is a 376-residue protein sequence, read N- to C-terminus: Lipid-A-disaccharide synthase (376 aa).

It belongs to the LpxB family.

It carries out the reaction a lipid X + a UDP-2-N,3-O-bis[(3R)-3-hydroxyacyl]-alpha-D-glucosamine = a lipid A disaccharide + UDP + H(+). It participates in bacterial outer membrane biogenesis; LPS lipid A biosynthesis. In terms of biological role, condensation of UDP-2,3-diacylglucosamine and 2,3-diacylglucosamine-1-phosphate to form lipid A disaccharide, a precursor of lipid A, a phosphorylated glycolipid that anchors the lipopolysaccharide to the outer membrane of the cell. The sequence is that of Lipid-A-disaccharide synthase from Pseudomonas fluorescens (strain Pf0-1).